Reading from the N-terminus, the 428-residue chain is Enolase (428 aa).

Q164 provides a ligand contact to (2R)-2-phosphoglycerate. E206 (proton donor) is an active-site residue. Positions 243, 286, and 313 each coordinate Mg(2+). (2R)-2-phosphoglycerate is bound by residues K338, R367, S368, and K389. K338 serves as the catalytic Proton acceptor.

This sequence belongs to the enolase family. Requires Mg(2+) as cofactor.

It localises to the cytoplasm. It is found in the secreted. Its subcellular location is the cell surface. It catalyses the reaction (2R)-2-phosphoglycerate = phosphoenolpyruvate + H2O. It participates in carbohydrate degradation; glycolysis; pyruvate from D-glyceraldehyde 3-phosphate: step 4/5. Its function is as follows. Catalyzes the reversible conversion of 2-phosphoglycerate (2-PG) into phosphoenolpyruvate (PEP). It is essential for the degradation of carbohydrates via glycolysis. The sequence is that of Enolase from Dehalococcoides mccartyi (strain ATCC BAA-2100 / JCM 16839 / KCTC 5957 / BAV1).